Reading from the N-terminus, the 285-residue chain is Protease HtpX homolog (285 aa).

The next 2 helical transmembrane spans lie at 7 to 27 and 30 to 50; these read TAML…MIGG and GMTI…WFSD. His131 lines the Zn(2+) pocket. The active site involves Glu132. His135 is a binding site for Zn(2+). Transmembrane regions (helical) follow at residues 141 to 161 and 177 to 197; these read ILIS…ANFA and IAGI…QMAI. Residue Glu202 coordinates Zn(2+).

This sequence belongs to the peptidase M48B family. Zn(2+) serves as cofactor.

It is found in the cell inner membrane. This Paraburkholderia phytofirmans (strain DSM 17436 / LMG 22146 / PsJN) (Burkholderia phytofirmans) protein is Protease HtpX homolog.